Reading from the N-terminus, the 142-residue chain is Peptide methionine sulfoxide reductase MsrB (142 aa).

One can recognise a MsrB domain in the interval 2–125 (LKKDKSELTD…NSAAIQFIPY (124 aa)). C114 serves as the catalytic Nucleophile.

The protein belongs to the MsrB Met sulfoxide reductase family.

It carries out the reaction L-methionyl-[protein] + [thioredoxin]-disulfide + H2O = L-methionyl-(R)-S-oxide-[protein] + [thioredoxin]-dithiol. In Staphylococcus aureus (strain Mu3 / ATCC 700698), this protein is Peptide methionine sulfoxide reductase MsrB.